The following is a 242-amino-acid chain: Small ribosomal subunit protein uS2 (242 aa).

This sequence belongs to the universal ribosomal protein uS2 family.

This chain is Small ribosomal subunit protein uS2, found in Aeromonas hydrophila subsp. hydrophila (strain ATCC 7966 / DSM 30187 / BCRC 13018 / CCUG 14551 / JCM 1027 / KCTC 2358 / NCIMB 9240 / NCTC 8049).